The chain runs to 166 residues: Phosphopantetheine adenylyltransferase (166 aa).

Position 11 (Ser11) interacts with substrate. Residues 11–12 and His19 contribute to the ATP site; that span reads SF. Residues Lys43, Val80, and Arg94 each coordinate substrate. ATP contacts are provided by residues 95 to 97, Glu105, and 130 to 136; these read GLR and VRTITAT.

Belongs to the bacterial CoaD family. In terms of assembly, homohexamer. It depends on Mg(2+) as a cofactor.

The protein localises to the cytoplasm. It carries out the reaction (R)-4'-phosphopantetheine + ATP + H(+) = 3'-dephospho-CoA + diphosphate. Its pathway is cofactor biosynthesis; coenzyme A biosynthesis; CoA from (R)-pantothenate: step 4/5. Functionally, reversibly transfers an adenylyl group from ATP to 4'-phosphopantetheine, yielding dephospho-CoA (dPCoA) and pyrophosphate. In Mesorhizobium japonicum (strain LMG 29417 / CECT 9101 / MAFF 303099) (Mesorhizobium loti (strain MAFF 303099)), this protein is Phosphopantetheine adenylyltransferase.